The following is a 1120-amino-acid chain: Transcription-repair-coupling factor (1120 aa).

Positions 591-756 (DLTNGMLMDR…MTGLKELSII (166 aa)) constitute a Helicase ATP-binding domain. 604–611 (GDVGFGKT) lines the ATP pocket. Residues 709 to 712 (DEEQ) carry the DEEQ box motif. The Helicase C-terminal domain maps to 777–933 (IIRDALLREH…TIASHDADLR (157 aa)).

This sequence in the N-terminal section; belongs to the UvrB family. It in the C-terminal section; belongs to the helicase family. RecG subfamily.

It is found in the cytoplasm. Couples transcription and DNA repair by recognizing RNA polymerase (RNAP) stalled at DNA lesions. Mediates ATP-dependent release of RNAP and its truncated transcript from the DNA, and recruitment of nucleotide excision repair machinery to the damaged site. The sequence is that of Transcription-repair-coupling factor from Rickettsia prowazekii (strain Madrid E).